We begin with the raw amino-acid sequence, 149 residues long: Arginine repressor (149 aa).

It belongs to the ArgR family.

Its subcellular location is the cytoplasm. It participates in amino-acid biosynthesis; L-arginine biosynthesis [regulation]. Functionally, regulates arginine biosynthesis genes. In Geobacillus thermodenitrificans (strain NG80-2), this protein is Arginine repressor.